Here is a 174-residue protein sequence, read N- to C-terminus: Interferon gamma (174 aa).

The N-terminal stretch at 1-23 is a signal peptide; the sequence is MNSTRCILALLLCLTQAMSGCYG. At glutamine 24 the chain carries Pyrrolidone carboxylic acid. Asparagine 39 and asparagine 106 each carry an N-linked (GlcNAc...) asparagine glycan.

Belongs to the type II (or gamma) interferon family. In terms of assembly, homodimer. Interacts with IFNGR1 (via extracellular domain); this interaction promotes IFNGR1 dimerization. As to expression, released primarily from activated T lymphocytes.

Its subcellular location is the secreted. In terms of biological role, type II interferon produced by immune cells such as T-cells and NK cells that plays crucial roles in antimicrobial, antiviral, and antitumor responses by activating effector immune cells and enhancing antigen presentation. Primarily signals through the JAK-STAT pathway after interaction with its receptor IFNGR1 to affect gene regulation. Upon IFNG binding, IFNGR1 intracellular domain opens out to allow association of downstream signaling components JAK2, JAK1 and STAT1, leading to STAT1 activation, nuclear translocation and transcription of IFNG-regulated genes. Many of the induced genes are transcription factors such as IRF1 that are able to further drive regulation of a next wave of transcription. Plays a role in class I antigen presentation pathway by inducing a replacement of catalytic proteasome subunits with immunoproteasome subunits. In turn, increases the quantity, quality, and repertoire of peptides for class I MHC loading. Increases the efficiency of peptide generation also by inducing the expression of activator PA28 that associates with the proteasome and alters its proteolytic cleavage preference. Up-regulates as well MHC II complexes on the cell surface by promoting expression of several key molecules such as cathepsins B/CTSB, H/CTSH, and L/CTSL. Participates in the regulation of hematopoietic stem cells during development and under homeostatic conditions by affecting their development, quiescence, and differentiation. This is Interferon gamma (IFNG) from Phodopus sungorus (Striped hairy-footed hamster).